The primary structure comprises 408 residues: Imidazolonepropionase (408 aa).

Residues histidine 73 and histidine 75 each contribute to the Fe(3+) site. Residues histidine 73 and histidine 75 each contribute to the Zn(2+) site. Residues arginine 82, tyrosine 145, and histidine 178 each contribute to the 4-imidazolone-5-propanoate site. Residue tyrosine 145 coordinates N-formimidoyl-L-glutamate. Position 243 (histidine 243) interacts with Fe(3+). Residue histidine 243 participates in Zn(2+) binding. A 4-imidazolone-5-propanoate-binding site is contributed by glutamine 246. A Fe(3+)-binding site is contributed by aspartate 318. Zn(2+) is bound at residue aspartate 318. N-formimidoyl-L-glutamate contacts are provided by asparagine 320 and glycine 322. A 4-imidazolone-5-propanoate-binding site is contributed by serine 323.

Belongs to the metallo-dependent hydrolases superfamily. HutI family. The cofactor is Zn(2+). Requires Fe(3+) as cofactor.

Its subcellular location is the cytoplasm. The enzyme catalyses 4-imidazolone-5-propanoate + H2O = N-formimidoyl-L-glutamate. It participates in amino-acid degradation; L-histidine degradation into L-glutamate; N-formimidoyl-L-glutamate from L-histidine: step 3/3. Catalyzes the hydrolytic cleavage of the carbon-nitrogen bond in imidazolone-5-propanoate to yield N-formimidoyl-L-glutamate. It is the third step in the universal histidine degradation pathway. The sequence is that of Imidazolonepropionase from Shewanella halifaxensis (strain HAW-EB4).